We begin with the raw amino-acid sequence, 132 residues long: DNA-packaging protein FI (132 aa).

A capsid binding region spans residues 81 to 132; sequence ELVTVVALVKLHTDALHATRDEPVAFVLPGTAFRVSAGVAAEMTERGLARMQ.

In terms of assembly, interacts with major capsid protein via c-terminus.

Its subcellular location is the host cytoplasm. In terms of biological role, stimulates the interaction of procapsid with the terminase-DNA complex, thereby increasing the overall rate of DNA packaging. Before packaging, it likely coats the surface of the procapsid through binding mediated by C-terminal domain. FI presumably dissociates from the capsid once it inflates upon DNA packaging, and is not present in the mature virion. The protein is DNA-packaging protein FI (Fi) of Escherichia coli (Bacteriophage lambda).